Reading from the N-terminus, the 589-residue chain is Splicing factor U2af large subunit B (589 aa).

The segment at 1–195 is disordered; sequence MMSYEGNGDG…KRRSGFDMAP (195 aa). Over residues 14 to 27 the composition is skewed to polar residues; that stretch reads STENHNENYISLES. 2 stretches are compositionally biased toward basic and acidic residues: residues 29–100 and 109–145; these read PFHE…DRQR and RDRS…DREV. Basic residues-rich tracts occupy residues 146-156 and 164-188; these read RHRRRSRSRSR and RSEH…SKRR. RRM domains lie at 255 to 338, 375 to 453, and 494 to 580; these read RRVY…RPTD, DRIF…RAIQ, and QVVT…YPED.

The protein belongs to the splicing factor SR family. In terms of assembly, component of the spliceosome. Interacts with SF1 in the nucleus.

It localises to the nucleus. The protein localises to the nucleus speckle. Functionally, necessary for the splicing of pre-mRNA. The chain is Splicing factor U2af large subunit B from Arabidopsis thaliana (Mouse-ear cress).